Here is a 464-residue protein sequence, read N- to C-terminus: Na(+)/H(+) antiporter NhaA 2 (464 aa).

11 helical membrane-spanning segments follow: residues 53 to 73 (VGGIILLVAAAAALIWANSPW), 96 to 116 (LTLGAWAADGLLAIFFLVVGL), 134 to 154 (ALPIAAAVGGMVVPALIFVLV), 165 to 185 (GWAIPTATDIAFAVAVLAVIS), 195 to 215 (FLLTLAVVDDLLAITVIAVFY), 219 to 239 (IKAWALALAVVPLALFTVCAQ), 257 to 277 (VLVHESGVHATVAGVLLGFAV), 313 to 333 (IAIPVFAFFAAGVSIGGLSGL), 340 to 360 (PITLGIVLGLVAGKPIGILVT), 378 to 398 (WVDVLGMSMLAGIGFTVSLLI), and 412 to 432 (FVKIGVLSGSLLAASLAAIVL).

The protein belongs to the NhaA Na(+)/H(+) (TC 2.A.33) antiporter family.

It localises to the cell membrane. The catalysed reaction is Na(+)(in) + 2 H(+)(out) = Na(+)(out) + 2 H(+)(in). In terms of biological role, na(+)/H(+) antiporter that extrudes sodium in exchange for external protons. This Mycolicibacterium vanbaalenii (strain DSM 7251 / JCM 13017 / BCRC 16820 / KCTC 9966 / NRRL B-24157 / PYR-1) (Mycobacterium vanbaalenii) protein is Na(+)/H(+) antiporter NhaA 2.